We begin with the raw amino-acid sequence, 423 residues long: MGFPRLWAALLRNWGRWTARPGPRVPGLPPMAGNKVPPALASHQPDRKGRGGWVWEETEHPAKRVKGGEDEEPPRKLPKRKIVLLMAYSGKGYHGMQRNLGSSQFRTIEDDLVSALVQAGCIPENHGTDMRKMSFQRCARTDKGVSAAGQVVSLKVWLIDDILDKINSHLPSHIRILGLKRVTGGFNSKNKCDARTYCYMLPTFAFAHKDRDVQDESYRLSAETLQQVNRLLACYKGTHNFHNFTSQKGPREPSARRYILEMYCEEPFVREGLEFAVIKVKGQSFMMHQIRKMVGLVVAIVKGYAPESVLERSWGEEKVDVPKAPGLGLVLERVHFEKYNQRFGGDGLHEPLDWTQEEGKVTAFKEQYIYPTIVSTERDERSMAQWLNTLPIHNFSGTALGAADTGAKVPSSLEGSEGDGDTD.

The disordered stretch occupies residues 32 to 75 (AGNKVPPALASHQPDRKGRGGWVWEETEHPAKRVKGGEDEEPPR). Positions 57–68 (ETEHPAKRVKGG) are enriched in basic and acidic residues. Residue aspartate 142 is the Nucleophile of the active site. The interval 403 to 423 (ADTGAKVPSSLEGSEGDGDTD) is disordered. Phosphoserine occurs at positions 411 and 416. Threonine 422 is modified (phosphothreonine).

Belongs to the tRNA pseudouridine synthase TruA family. Monomer. Forms a complex with RARG and the SRA1 RNA in the nucleus.

The protein resides in the nucleus. It is found in the cytoplasm. It localises to the mitochondrion. The enzyme catalyses a uridine in tRNA = a pseudouridine in tRNA. It carries out the reaction uridine(38/39/40) in tRNA = pseudouridine(38/39/40) in tRNA. The catalysed reaction is a uridine in mRNA = a pseudouridine in mRNA. In terms of biological role, pseudouridylate synthase that catalyzes pseudouridylation of tRNAs and mRNAs. Acts on positions 27/28 in the anticodon stem and also positions 34 and 36 in the anticodon of an intron containing tRNA. Also catalyzes pseudouridylation of mRNAs: mediates pseudouridylation of mRNAs with the consensus sequence 5'-UGUAG-3'. Acts as a regulator of pre-mRNA splicing by mediating pseudouridylation of pre-mRNAs at locations associated with alternatively spliced regions. Pseudouridylation of pre-mRNAs near splice sites directly regulates mRNA splicing and mRNA 3'-end processing. Involved in regulation of nuclear receptor activity through pseudouridylation of SRA1 mRNA. Does not form pseudouridine when expressed in vitro. The protein is Pseudouridylate synthase 1 homolog of Mus musculus (Mouse).